The sequence spans 286 residues: Single myb histone 5 (286 aa).

Residues 1-61 (MGAPKQRWTS…KWRNMNVIVT (61 aa)) form the HTH myb-type domain. Positions 28-57 (WRMILNDPELSSTLRYRSNVDLKDKWRNMN) form a DNA-binding region, H-T-H motif. Positions 122-190 (SHSRLDNIIM…KVNRKYRIAP (69 aa)) constitute an H15 domain. A coiled-coil region spans residues 229 to 277 (EAAAAAAAHAVAEAEAIMAEAEAAAREAEAAEAEARAAQAFAEAAVLTL).

Belongs to the histone H1/H5 family. SMH subfamily. In terms of assembly, forms a homodimer and heterodimers.

It is found in the nucleus. Its subcellular location is the chromosome. The protein resides in the nucleolus. The protein localises to the telomere. In terms of biological role, binds preferentially double-stranded telomeric repeats, but may also bind to the single telomeric strand. This is Single myb histone 5 (SMH5) from Zea mays (Maize).